The chain runs to 349 residues: UDP-galactose/UDP-glucose transporter 4 (349 aa).

8 helical membrane passes run 23–43 (WQQF…NGIC), 56–76 (GWYF…MYGF), 115–135 (IMFK…IPGL), 140–160 (PVHE…FTLA), 167–187 (NFSI…AFLG), 205–225 (MLFC…ILTG), 248–268 (AMAT…FGAA), and 293–313 (LTEQ…LKMV). Residues 316–349 (PNPNPKSSGSGQTPGKLERVKFEKEDDEESRPLV) are disordered. The span at 340 to 349 (EDDEESRPLV) shows a compositional bias: acidic residues.

The protein belongs to the nucleotide-sugar transporter family. UDP-galactose:UMP antiporter (TC 2.A.7.11) subfamily.

It localises to the membrane. Its function is as follows. Sugar transporter involved in the transport of nucleotide-sugars from cytoplasm into the Golgi and/or the endoplasmic reticulum. The chain is UDP-galactose/UDP-glucose transporter 4 from Arabidopsis thaliana (Mouse-ear cress).